The following is a 334-amino-acid chain: Phosphate acyltransferase (334 aa).

It belongs to the PlsX family. In terms of assembly, homodimer. Probably interacts with PlsY.

It is found in the cytoplasm. It catalyses the reaction a fatty acyl-[ACP] + phosphate = an acyl phosphate + holo-[ACP]. It functions in the pathway lipid metabolism; phospholipid metabolism. Its function is as follows. Catalyzes the reversible formation of acyl-phosphate (acyl-PO(4)) from acyl-[acyl-carrier-protein] (acyl-ACP). This enzyme utilizes acyl-ACP as fatty acyl donor, but not acyl-CoA. The chain is Phosphate acyltransferase from Clostridium tetani (strain Massachusetts / E88).